Consider the following 314-residue polypeptide: Target of rapamycin complex subunit wat1 (314 aa).

WD repeat units follow at residues Met1 to Thr35, His38 to Leu76, Gly81 to Asn120, Asp122 to Glu161, Glu165 to Leu204, Ala213 to Glu252, and Gly257 to Gln296. A Phosphoserine modification is found at Ser141.

It belongs to the WD repeat LST8 family. The target of rapamycin complex 1 (TORC1) is composed of at least mip1, pop3/wat1, tco89, toc1 and tor2. The target of rapamycin complex 2 (TORC2) is composed of at least bit61, pop3/wat1, sin1, ste20 and tor1. Interacts with prp2.

It is found in the cytoplasm. Its subcellular location is the nucleus. In terms of biological role, component of both TORC1 and TORC2, which regulate multiple cellular processes to control cell growth in response to environmental signals. Nutrient limitation and environmental stress signals cause inactivation of TORC1. Active TORC1 positively controls cell growth and ribosome biogenesis by regulating ribosomal protein gene expression. TORC1 negatively controls G1 cell-cycle arrest, sexual development and amino acid uptake. Represses mating, meiosis and sporulation efficiency by interfering with the functions of the transcription factor ste11 and the meiosis-promoting RNA-binding protein mei2. TORC2 is required for cell survival under various stress conditions. TORC2 positively controls G1 cell-cycle arrest, sexual development and amino acid uptake. Positively regulates amino acid uptake through the control of expression of amino acid permeases. May play a role in mRNA maturation as a coupling protein between splicing and synthesis and/or stabilization. This chain is Target of rapamycin complex subunit wat1, found in Schizosaccharomyces pombe (strain 972 / ATCC 24843) (Fission yeast).